A 386-amino-acid polypeptide reads, in one-letter code: Succinate--CoA ligase [ADP-forming] subunit beta (386 aa).

Residues 9-244 (KAVLRSYGVS…LDEEDAKEIE (236 aa)) form the ATP-grasp domain. ATP is bound by residues lysine 46, 53–55 (GRG), glutamate 99, cysteine 102, and glutamate 107. Mg(2+)-binding residues include asparagine 199 and aspartate 213. Substrate contacts are provided by residues asparagine 264 and 321 to 323 (GIM).

This sequence belongs to the succinate/malate CoA ligase beta subunit family. In terms of assembly, heterotetramer of two alpha and two beta subunits. Requires Mg(2+) as cofactor.

It carries out the reaction succinate + ATP + CoA = succinyl-CoA + ADP + phosphate. The enzyme catalyses GTP + succinate + CoA = succinyl-CoA + GDP + phosphate. Its pathway is carbohydrate metabolism; tricarboxylic acid cycle; succinate from succinyl-CoA (ligase route): step 1/1. Succinyl-CoA synthetase functions in the citric acid cycle (TCA), coupling the hydrolysis of succinyl-CoA to the synthesis of either ATP or GTP and thus represents the only step of substrate-level phosphorylation in the TCA. The beta subunit provides nucleotide specificity of the enzyme and binds the substrate succinate, while the binding sites for coenzyme A and phosphate are found in the alpha subunit. This is Succinate--CoA ligase [ADP-forming] subunit beta from Bacillus thuringiensis (strain Al Hakam).